The sequence spans 423 residues: Probable electron transfer flavoprotein-quinone oxidoreductase YgcN (423 aa).

An FAD-binding site is contributed by Ile7 to Leu21.

The protein belongs to the ETF-QO/FixC family. FAD serves as cofactor.

In terms of biological role, probably accepts electrons from YgcQ/YgcR and reduces a quinone. In Escherichia coli (strain K12), this protein is Probable electron transfer flavoprotein-quinone oxidoreductase YgcN (ygcN).